Here is a 262-residue protein sequence, read N- to C-terminus: Phosphoribosylformylglycinamidine synthase subunit PurQ (262 aa).

One can recognise a Glutamine amidotransferase type-1 domain in the interval 2 to 238 (RIAVIQFPGT…FAWQLPRKHP (237 aa)). Cysteine 87 (nucleophile) is an active-site residue. Catalysis depends on residues histidine 223 and glutamate 225.

In terms of assembly, part of the FGAM synthase complex composed of 1 PurL, 1 PurQ and 2 PurS subunits.

The protein localises to the cytoplasm. The catalysed reaction is N(2)-formyl-N(1)-(5-phospho-beta-D-ribosyl)glycinamide + L-glutamine + ATP + H2O = 2-formamido-N(1)-(5-O-phospho-beta-D-ribosyl)acetamidine + L-glutamate + ADP + phosphate + H(+). The enzyme catalyses L-glutamine + H2O = L-glutamate + NH4(+). It functions in the pathway purine metabolism; IMP biosynthesis via de novo pathway; 5-amino-1-(5-phospho-D-ribosyl)imidazole from N(2)-formyl-N(1)-(5-phospho-D-ribosyl)glycinamide: step 1/2. Part of the phosphoribosylformylglycinamidine synthase complex involved in the purines biosynthetic pathway. Catalyzes the ATP-dependent conversion of formylglycinamide ribonucleotide (FGAR) and glutamine to yield formylglycinamidine ribonucleotide (FGAM) and glutamate. The FGAM synthase complex is composed of three subunits. PurQ produces an ammonia molecule by converting glutamine to glutamate. PurL transfers the ammonia molecule to FGAR to form FGAM in an ATP-dependent manner. PurS interacts with PurQ and PurL and is thought to assist in the transfer of the ammonia molecule from PurQ to PurL. This is Phosphoribosylformylglycinamidine synthase subunit PurQ from Methanothrix thermoacetophila (strain DSM 6194 / JCM 14653 / NBRC 101360 / PT) (Methanosaeta thermophila).